The sequence spans 167 residues: MINVEIVRNYNKWREHKQINKSLIKKITQNILLRFDNFSKIKQFELSILLTNAAEILTLNKQFRNIEKATNVLSFPSNELNWQDLYSKLEFLGDSDYMHLGDIAFCYEVIYNESCEQHKTFENHFIHLLIHSILHLIGFDHQNDTEANIMENLEIEILSYFGIFPPY.

Zn(2+)-binding residues include His131, His135, and His141.

The protein belongs to the endoribonuclease YbeY family. Requires Zn(2+) as cofactor.

It localises to the cytoplasm. Single strand-specific metallo-endoribonuclease involved in late-stage 70S ribosome quality control and in maturation of the 3' terminus of the 16S rRNA. The protein is Endoribonuclease YbeY of Rickettsia conorii (strain ATCC VR-613 / Malish 7).